The sequence spans 478 residues: Putrescine oxidase (478 aa).

Position 15-70 (Arg-15–Ile-70) interacts with FAD.

The protein belongs to the flavin monoamine oxidase family. Requires FAD as cofactor.

It catalyses the reaction putrescine + O2 + H2O = 4-aminobutanal + H2O2 + NH4(+). The chain is Putrescine oxidase (puo) from Kocuria rosea (Deinococcus erythromyxa).